The sequence spans 256 residues: Imidazole glycerol phosphate synthase subunit HisF (256 aa).

Catalysis depends on residues Asp12 and Asp131.

The protein belongs to the HisA/HisF family. As to quaternary structure, heterodimer of HisH and HisF.

It is found in the cytoplasm. The catalysed reaction is 5-[(5-phospho-1-deoxy-D-ribulos-1-ylimino)methylamino]-1-(5-phospho-beta-D-ribosyl)imidazole-4-carboxamide + L-glutamine = D-erythro-1-(imidazol-4-yl)glycerol 3-phosphate + 5-amino-1-(5-phospho-beta-D-ribosyl)imidazole-4-carboxamide + L-glutamate + H(+). The protein operates within amino-acid biosynthesis; L-histidine biosynthesis; L-histidine from 5-phospho-alpha-D-ribose 1-diphosphate: step 5/9. Functionally, IGPS catalyzes the conversion of PRFAR and glutamine to IGP, AICAR and glutamate. The HisF subunit catalyzes the cyclization activity that produces IGP and AICAR from PRFAR using the ammonia provided by the HisH subunit. The polypeptide is Imidazole glycerol phosphate synthase subunit HisF (Bifidobacterium longum (strain NCC 2705)).